A 160-amino-acid chain; its full sequence is Large ribosomal subunit protein uL18 (160 aa).

The protein belongs to the universal ribosomal protein uL18 family. Part of the 50S ribosomal subunit. Contacts the 5S and 23S rRNAs.

Its function is as follows. This is one of the proteins that bind and probably mediate the attachment of the 5S RNA into the large ribosomal subunit, where it forms part of the central protuberance. This Thermoplasma volcanium (strain ATCC 51530 / DSM 4299 / JCM 9571 / NBRC 15438 / GSS1) protein is Large ribosomal subunit protein uL18.